Reading from the N-terminus, the 450-residue chain is MAAPPLGRLVLTHLLVALFGMGSWIAVNGIWVELPVVVKELPEGWSLPSYLSVLVALGNLGLLLVTLWRRLAPGKSERIPIQVVQGLSIVGTGLLAPLWSNMALVAGQLHSVAFLTLAFVLALSCCASNVTFLPFLSHLPPPFLRSFFLGQGLSALLPCVLALAQGVGRLECLHVPANGTTGPPIKVSPINFPERFSAGTFFWVLTALLGTSAAAFQGLLLLLPSPPPEATMGTGLRVETPGTEEEEEEEEASPLQEPPGQVASIVSSPDPKAHRLFSSRSACLLGLLAITNALTNGVLPAVQSFSCLPYGRLAYHLAVVLGSSANPLACFLAMAVLCRSLAGLYGLCLLGMFFGTYLMTLAVLSPCPPLVGTSAGVVLVVLSWVLCAGVFSYIKVATSSMLHSGGRPALLAAGVAIQVGSLLGAIAMFPPTSVYPVFRSGEDCVDQCGP.

Helical transmembrane passes span 14–34 (LLVA…WVEL), 47–67 (LPSY…LVTL), 79–99 (IPIQ…APLW), 114–136 (FLTL…LPFL), and 147–167 (FFLG…AQGV). Asn-178 carries an N-linked (GlcNAc...) asparagine glycan. Residues 201–221 (FFWVLTALLGTSAAAFQGLLL) traverse the membrane as a helical segment. A disordered region spans residues 230–268 (ATMGTGLRVETPGTEEEEEEEEASPLQEPPGQVASIVSS). Over residues 242-252 (GTEEEEEEEEA) the composition is skewed to acidic residues. 5 helical membrane passes run 282–302 (ACLL…LPAV), 317–337 (LAVV…MAVL), 344–364 (LYGL…LAVL), 371–391 (VGTS…AGVF), and 409–429 (ALLA…IAMF).

It belongs to the riboflavin transporter family. In terms of tissue distribution, highly expressed in the placenta and small intestine, moderately in the kidney, colon, lung, prostate, uterus, and thymus, and weakly in all other tissues.

The protein localises to the cell membrane. It carries out the reaction riboflavin(in) = riboflavin(out). Its activity is regulated as follows. Riboflavin transport is Na(+)-independent but moderately pH-sensitive. Activity is strongly inhibited by riboflavin analogs, such as lumiflavin. Weakly inhibited by flavin adenine dinucleotide (FAD) and flavin mononucleotide (FMN). Plasma membrane transporter mediating the uptake by cells of the water soluble vitamin B2/riboflavin that plays a key role in biochemical oxidation-reduction reactions of the carbohydrate, lipid, and amino acid metabolism. May also act as a receptor for 4-hydroxybutyrate. This is Solute carrier family 52, riboflavin transporter, member 2 (Slc52a2) from Rattus norvegicus (Rat).